The primary structure comprises 408 residues: MYIPESIGTPLTPNATKVMLLGSGELGKEVAIAFQRLGLEVHAVDRYEHAPAHQVAHFSYVIDMTDAAQVRELVERVRPDFVIPEIEALATDELVKIEEEGLATIVPTARAAKLTMNREGIRKLAAEELGLPTSNYEFCSTFEEFSAAAEKLGYPNVVKPVMSSSGKGQSVLRSSDDLQAAWDYAMSGARVANSRVIVEAFVEFDYEITLLTVRSIDPTTSKPATWFCEPIGHRQEDGDYVESWQPMEMTPRALENARSVAARITNALGGRGVFGVELFVSGDDVYFSEVSPRPHDTGLVTLATQRFSEFELHAKAILGLPVDVTLISPGASAVIYGGIESEGVSYTGLAEALAVAETDLRIFAKPEAFTKRRMGVAVSTAEDVAAARDRATLAAAAIKVHPGNSAEA.

Residues 25–26 (EL) and Glu-85 each bind N(1)-(5-phospho-beta-D-ribosyl)glycinamide. ATP is bound by residues Arg-118, Lys-159, 164–169 (SSGKGQ), 199–202 (EAFV), and Glu-207. Residues 123 to 318 (KLAAEELGLP…EFELHAKAIL (196 aa)) enclose the ATP-grasp domain. 2 residues coordinate Mg(2+): Glu-277 and Glu-289. Residues Asp-296, Lys-365, and 372–373 (RR) contribute to the N(1)-(5-phospho-beta-D-ribosyl)glycinamide site.

Belongs to the PurK/PurT family. In terms of assembly, homodimer.

The catalysed reaction is N(1)-(5-phospho-beta-D-ribosyl)glycinamide + formate + ATP = N(2)-formyl-N(1)-(5-phospho-beta-D-ribosyl)glycinamide + ADP + phosphate + H(+). It participates in purine metabolism; IMP biosynthesis via de novo pathway; N(2)-formyl-N(1)-(5-phospho-D-ribosyl)glycinamide from N(1)-(5-phospho-D-ribosyl)glycinamide (formate route): step 1/1. Its function is as follows. Involved in the de novo purine biosynthesis. Catalyzes the transfer of formate to 5-phospho-ribosyl-glycinamide (GAR), producing 5-phospho-ribosyl-N-formylglycinamide (FGAR). Formate is provided by PurU via hydrolysis of 10-formyl-tetrahydrofolate. The polypeptide is Formate-dependent phosphoribosylglycinamide formyltransferase (Corynebacterium glutamicum (strain R)).